Consider the following 308-residue polypeptide: tRNA pseudouridine synthase B (308 aa).

The active-site Nucleophile is the D47.

The protein belongs to the pseudouridine synthase TruB family. Type 1 subfamily.

It catalyses the reaction uridine(55) in tRNA = pseudouridine(55) in tRNA. Functionally, responsible for synthesis of pseudouridine from uracil-55 in the psi GC loop of transfer RNAs. This Xanthomonas euvesicatoria pv. vesicatoria (strain 85-10) (Xanthomonas campestris pv. vesicatoria) protein is tRNA pseudouridine synthase B.